The following is a 465-amino-acid chain: Chaperone protein dnaJ C76, chloroplastic (465 aa).

The transit peptide at 1–38 (MTPAIFSPTTLPPSTATWPCSTSQKLITVRSPLKFKCR) directs the protein to the chloroplast. One can recognise a J domain in the interval 50–113 (DLYDLLGIDR…ISRQAYDKEQ (64 aa)). The interval 346 to 385 (AALPSSGNNNGSKASSNPQVTRKTFPSEEKPTSRRENRRQ) is disordered. Residues 350–362 (SSGNNNGSKASSN) show a composition bias toward low complexity. Basic and acidic residues predominate over residues 370–384 (FPSEEKPTSRRENRR).

The protein belongs to the DnaJ family. Expressed in roots, exclusively in the stele.

Its subcellular location is the plastid. The protein localises to the chloroplast. May function together with HSC70 chaperone to assist protein folding and prevent protein aggregation during salt stress in the chloroplast. Involved in root development. Required for the position-dependent cell fate determination during root hair development. This Arabidopsis thaliana (Mouse-ear cress) protein is Chaperone protein dnaJ C76, chloroplastic.